The following is a 1534-amino-acid chain: ABC transporter G family member 6 (1534 aa).

Basic and acidic residues predominate over residues 1 to 11 (MAKQDPKDKNS). Residues 1–85 (MAKQDPKDKN…ESNYDSDDEK (85 aa)) form a disordered region. Low complexity predominate over residues 21–65 (NNNNNENLDNDQELLNNNNNNNNNNNNNNNNNNNNNNNNNNNNNL). The region spanning 138 to 385 (VYCRNATYTV…FKKLGFACPS (248 aa)) is the ABC transporter 1 domain. 177 to 184 (GTPGCGKS) contributes to the ATP binding site. Positions 481–757 (RRNYYNFLTR…VVCFFALKYF (277 aa)) constitute an ABC transmembrane type-2 1 domain. Transmembrane regions (helical) follow at residues 486–506 (NFLTRVAKGIFFGLLLGTLYW), 521–541 (LLFFIMVTIIFSSFAAVNSFF), 566–586 (IICDIPAGILEVAFFGPIVYW), 592–612 (PVFIRFVYFMLLLIMTDNLSL), 625–645 (IEIANVIASVILSIWLLFSGF), 652–672 (IGGWWIWLYYISPYTWIFQGL), and 734–754 (VVFGILSAYIVFFYVVCFFAL). Residues 781 to 907 (KQDEESAAIS…KSKNGKDIGS (127 aa)) are disordered. Residues 797-808 (IDDDNDDDADYE) are compositionally biased toward acidic residues. The span at 830–841 (SPSSLTTGSPYY) shows a compositional bias: polar residues. Residues 842-856 (NINNNNNNLSGSGNN) are compositionally biased toward low complexity. Residues 864–873 (TPSNLSPSVN) show a composition bias toward polar residues. Low complexity predominate over residues 874 to 896 (SPITINSPMPTSPSNNNNNNNSN). Residues 897–906 (EKSKNGKDIG) are compositionally biased toward basic and acidic residues. The 243-residue stretch at 924–1166 (VKVDDPDNPK…VILDYCDKLG (243 aa)) folds into the ABC transporter 2 domain. 960-967 (GPSGAGKS) contacts ATP. The ABC transmembrane type-2 2 domain maps to 1256–1529 (LRRPAIFVSN…GLSFWGFKKI (274 aa)). 6 consecutive transmembrane segments (helical) span residues 1261 to 1281 (IFVSNCIRSILLAVLLGTLFV), 1296 to 1316 (LLFFSFLFAGMVAIGNIPTTV), 1345 to 1365 (YPFTLSTGILYIIPTFWIAGL), 1377 to 1397 (CLFIFIITYVMYDAFGLCLAV), 1404 to 1424 (MASTICGIGLSLSTLFGGFVI), and 1506 to 1526 (IDIAAIFGYIFIFVGLSFWGF).

The protein belongs to the ABC transporter superfamily. ABCG family. PDR (TC 3.A.1.205) subfamily.

The protein resides in the membrane. This Dictyostelium discoideum (Social amoeba) protein is ABC transporter G family member 6 (abcG6).